We begin with the raw amino-acid sequence, 69 residues long: Probable molybdenum-pterin-binding protein (69 aa).

The Mop domain occupies 2–68 (KISARNQLKG…IKATSVMVGV (67 aa)).

This sequence to C.pasteurianum MOP proteins.

Functionally, binds one mole of molybdenum per mole of protein and contains a pterin. This Haemophilus influenzae (strain ATCC 51907 / DSM 11121 / KW20 / Rd) protein is Probable molybdenum-pterin-binding protein.